We begin with the raw amino-acid sequence, 349 residues long: Phosphoribosylformylglycinamidine cyclo-ligase (349 aa).

The protein belongs to the AIR synthase family.

The protein localises to the cytoplasm. The enzyme catalyses 2-formamido-N(1)-(5-O-phospho-beta-D-ribosyl)acetamidine + ATP = 5-amino-1-(5-phospho-beta-D-ribosyl)imidazole + ADP + phosphate + H(+). The protein operates within purine metabolism; IMP biosynthesis via de novo pathway; 5-amino-1-(5-phospho-D-ribosyl)imidazole from N(2)-formyl-N(1)-(5-phospho-D-ribosyl)glycinamide: step 2/2. The polypeptide is Phosphoribosylformylglycinamidine cyclo-ligase (Methanococcus maripaludis (strain C7 / ATCC BAA-1331)).